Reading from the N-terminus, the 107-residue chain is MMKVLVVVALLVTLISYSSSEGIDDLEADELLSLMANEQTRKECIPKHHECTSNKHGCCRGNFFKYKCQCTTVVTQDGEQTERCFCGTPPHHKAAELVVGFRKKIFG.

The N-terminal stretch at 1 to 20 (MMKVLVVVALLVTLISYSSS) is a signal peptide. Residues 21–41 (EGIDDLEADELLSLMANEQTR) constitute a propeptide that is removed on maturation. Cystine bridges form between cysteine 44/cysteine 59, cysteine 51/cysteine 68, cysteine 58/cysteine 86, and cysteine 70/cysteine 84.

It belongs to the neurotoxin 19 (CSTX) family. 04 (U1-Lctx) subfamily. In terms of tissue distribution, expressed by the venom gland.

The protein resides in the secreted. The polypeptide is U1-lycotoxin-Ls1l (Lycosa singoriensis (Wolf spider)).